Here is a 242-residue protein sequence, read N- to C-terminus: LexA repressor (242 aa).

The H-T-H motif DNA-binding region spans 26–46 (FEEMKAALNLKSKSGIHRLIS). Residues S163 and K201 each act as for autocatalytic cleavage activity in the active site.

The protein belongs to the peptidase S24 family. In terms of assembly, homodimer.

The enzyme catalyses Hydrolysis of Ala-|-Gly bond in repressor LexA.. Functionally, represses a number of genes involved in the response to DNA damage (SOS response), including recA and lexA. In the presence of single-stranded DNA, RecA interacts with LexA causing an autocatalytic cleavage which disrupts the DNA-binding part of LexA, leading to derepression of the SOS regulon and eventually DNA repair. This Granulibacter bethesdensis (strain ATCC BAA-1260 / CGDNIH1) protein is LexA repressor.